Here is a 315-residue protein sequence, read N- to C-terminus: Shiga-like toxin 1 subunit A (315 aa).

Residues 1–22 form the signal peptide; the sequence is MKIIIFRVLTFFFVIFSVNVVA. Residues 23 to 273 are A1; that stretch reads KEFTLDFSTA…CHHHASRVAR (251 aa). The active site involves E189. A disulfide bond links C264 and C283. Residues 274–315 are A2; the sequence is MASDEFPSMCPADGRVRGITHNKILWDSSTLGAILMRRTISS.

It belongs to the ribosome-inactivating protein family. Shiga-like toxin contains a single subunit A and five copies of subunit B.

It localises to the secreted. The catalysed reaction is Endohydrolysis of the N-glycosidic bond at one specific adenosine on the 28S rRNA.. Functionally, the A subunit is responsible for inhibiting protein synthesis through the catalytic inactivation of 60S ribosomal subunits. After endocytosis, the A subunit is cleaved by furin in two fragments, A1 and A2: A1 is the catalytically active fragment, and A2 is essential for holotoxin assembly with the B subunits. This Escherichia coli (Bacteriophage H19B) protein is Shiga-like toxin 1 subunit A (stxA).